Consider the following 468-residue polypeptide: Ribulose bisphosphate carboxylase large chain (468 aa).

N6,N6,N6-trimethyllysine is present on K7. Positions 116 and 166 each coordinate substrate. Catalysis depends on K168, which acts as the Proton acceptor. Substrate is bound at residue K170. The Mg(2+) site is built by K194, D196, and E197. At K194 the chain carries N6-carboxylysine. Residue H287 is the Proton acceptor of the active site. The substrate site is built by R288, H320, and S372.

It belongs to the RuBisCO large chain family. Type I subfamily. In terms of assembly, heterohexadecamer of 8 large chains and 8 small chains; disulfide-linked. The disulfide link is formed within the large subunit homodimers. Mg(2+) is required as a cofactor. Post-translationally, the disulfide bond which can form in the large chain dimeric partners within the hexadecamer appears to be associated with oxidative stress and protein turnover.

The protein resides in the plastid. It localises to the chloroplast. It catalyses the reaction 2 (2R)-3-phosphoglycerate + 2 H(+) = D-ribulose 1,5-bisphosphate + CO2 + H2O. It carries out the reaction D-ribulose 1,5-bisphosphate + O2 = 2-phosphoglycolate + (2R)-3-phosphoglycerate + 2 H(+). Functionally, ruBisCO catalyzes two reactions: the carboxylation of D-ribulose 1,5-bisphosphate, the primary event in carbon dioxide fixation, as well as the oxidative fragmentation of the pentose substrate in the photorespiration process. Both reactions occur simultaneously and in competition at the same active site. The sequence is that of Ribulose bisphosphate carboxylase large chain from Cornus alternifolia (Pagoda dogwood).